The chain runs to 123 residues: Large ribosomal subunit protein uL18 (123 aa).

It belongs to the universal ribosomal protein uL18 family. Part of the 50S ribosomal subunit; part of the 5S rRNA/L5/L18/L25 subcomplex. Contacts the 5S and 23S rRNAs.

Its function is as follows. This is one of the proteins that bind and probably mediate the attachment of the 5S RNA into the large ribosomal subunit, where it forms part of the central protuberance. This is Large ribosomal subunit protein uL18 from Chlamydia pneumoniae (Chlamydophila pneumoniae).